A 330-amino-acid chain; its full sequence is Ribosomal RNA small subunit methyltransferase H (330 aa).

S-adenosyl-L-methionine is bound by residues 51-53 (GGH), aspartate 70, aspartate 118, and glutamine 125. Residues 276 to 330 (STDSTPPGLPVPLPDRQPELRLLTRGAELPTEQETAANPRAASARLRAAERTREP) are disordered. Positions 311–321 (AANPRAASARL) are enriched in low complexity.

Belongs to the methyltransferase superfamily. RsmH family.

It localises to the cytoplasm. The catalysed reaction is cytidine(1402) in 16S rRNA + S-adenosyl-L-methionine = N(4)-methylcytidine(1402) in 16S rRNA + S-adenosyl-L-homocysteine + H(+). In terms of biological role, specifically methylates the N4 position of cytidine in position 1402 (C1402) of 16S rRNA. The polypeptide is Ribosomal RNA small subunit methyltransferase H (Thermobifida fusca (strain YX)).